We begin with the raw amino-acid sequence, 117 residues long: Ribonuclease P protein component (117 aa).

It belongs to the RnpA family. In terms of assembly, consists of a catalytic RNA component (M1 or rnpB) and a protein subunit.

The catalysed reaction is Endonucleolytic cleavage of RNA, removing 5'-extranucleotides from tRNA precursor.. In terms of biological role, RNaseP catalyzes the removal of the 5'-leader sequence from pre-tRNA to produce the mature 5'-terminus. It can also cleave other RNA substrates such as 4.5S RNA. The protein component plays an auxiliary but essential role in vivo by binding to the 5'-leader sequence and broadening the substrate specificity of the ribozyme. The sequence is that of Ribonuclease P protein component from Desulforapulum autotrophicum (strain ATCC 43914 / DSM 3382 / VKM B-1955 / HRM2) (Desulfobacterium autotrophicum).